The primary structure comprises 834 residues: MTEPKIDRRQLLKLEAAAIAAAAAGMPTVARAANLVTEREATELKWDKAACRFCGTGCSVMVATKDNRVVATHGDIKAEVNRGLNCVKGYFLSKIMYGHDRLTHPMLRKTGGQYDKNGEFTPVSWDEAFDVMALKFKDALKKRGPSGVGMFGSGQWTIWEGYAASKLFKAGFRTNNIDPNARHCMASAVAGMMRTFGIDEPAGCYDDIEATDAFVLWGSNMAEMHPILWTRVTDRRLSAPHVKVAVLSTFEHRSFDLADVGMVFKPQTDLYILNAIANHIISTGRVNKDFVSAHTVFKKGQTDIGYGLRPEHPLQKKATGAAKANDATDISFDEYAKFVSDYTLEKAADMSGVPLNRLQALAELYADPKTKVVSFWTMGFNQHTRGVWCNNLVYNIHLLTGKIAEAGNSPFSLTGQPSACGTAREVGTFSHRLPADMVVTNKEHRTKAEHIWQLPEGTIPDKPGYHAVLQSRMLKDGLLNAYWVQVNNNLQAGPNANEETYPGFRNPDNFIVVSDAYPSVTALAADLILPTAMWVEKEGAYGNAERRTQFWHQLVSAPGEARSDLWQLMEFSKRFKIEDVWPEELIAKKPDVRGKTLFDVLYKNGQVDKFPLDQIEPGYANDESKAFGFYVHKGLFEEYASFGRGHGHDLAPFEAYHKERGLRWPVVDGKETRWRFREGSDPYVKAGTGVQFYGFPDGKARIFALPYEPPAESPDKDYPFWLSTGRVVEHWHSGTMTRRVPELYKAFPEAVCFMHPDDAQEANLRRGDEVKVASRRGFIRARVETRGRDKPPRGLVFVPWFDESKLINKVTLDATDPISLQTDYKKCAVRIERV.

Positions 1–32 (MTEPKIDRRQLLKLEAAAIAAAAAGMPTVARA) form a signal peptide, tat-type signal. A 4Fe-4S Mo/W bis-MGD-type domain is found at 44 to 100 (LKWDKAACRFCGTGCSVMVATKDNRVVATHGDIKAEVNRGLNCVKGYFLSKIMYGHD). The [4Fe-4S] cluster site is built by Cys51, Cys54, Cys58, and Cys86. Residues Lys88, Gln155, Asn180, Cys184, 217-224 (WGSNMAEM), 248-252 (STFEH), 267-269 (QTD), Met378, Gln382, Asn488, 514-515 (SD), Lys537, Asp564, and 724-733 (TGRVVEHWHS) contribute to the Mo-bis(molybdopterin guanine dinucleotide) site. Trp800 provides a ligand contact to substrate. Residues Asn808 and Lys825 each coordinate Mo-bis(molybdopterin guanine dinucleotide).

The protein belongs to the prokaryotic molybdopterin-containing oxidoreductase family. NasA/NapA/NarB subfamily. As to quaternary structure, component of the periplasmic nitrate reductase NapAB complex composed of NapA and NapB. It depends on [4Fe-4S] cluster as a cofactor. Mo-bis(molybdopterin guanine dinucleotide) serves as cofactor. Predicted to be exported by the Tat system. The position of the signal peptide cleavage has not been experimentally proven.

The protein localises to the periplasm. It catalyses the reaction 2 Fe(II)-[cytochrome] + nitrate + 2 H(+) = 2 Fe(III)-[cytochrome] + nitrite + H2O. In terms of biological role, catalytic subunit of the periplasmic nitrate reductase complex NapAB. Receives electrons from NapB and catalyzes the reduction of nitrate to nitrite. This chain is Periplasmic nitrate reductase, found in Bradyrhizobium sp. (strain ORS 278).